A 202-amino-acid chain; its full sequence is Transmembrane 4 L6 family member 1 (202 aa).

Topologically, residues 1–9 are cytoplasmic; that stretch reads MCYGKCARC. A helical membrane pass occupies residues 10–30; it reads IGHSLVGLALLCIAANILLYF. Residues 31–49 are Extracellular-facing; it reads PNGETKYASENHLSRFVWF. A helical membrane pass occupies residues 50–70; the sequence is FSGIVGGGLLMLLPAFVFIGL. The Cytoplasmic portion of the chain corresponds to 71–93; sequence EQDDCCGCCGHENCGKRCAMLSS. The chain crosses the membrane as a helical span at residues 94 to 114; that stretch reads VLAALIGIAGSGYCVIVAALG. Residues 115–161 lie on the Extracellular side of the membrane; the sequence is LAEGPLCLDSLGQWNYTFASTEGQYLLDTSTWSECTEPKHIVEWNVS. N-linked (GlcNAc...) asparagine glycosylation is found at asparagine 129 and asparagine 159. A helical transmembrane segment spans residues 162-182; sequence LFSILLALGGIEFILCLIQVI. Residues 183-202 lie on the Cytoplasmic side of the membrane; that stretch reads NGVLGGICGFCCSHQQQYDC.

Belongs to the L6 tetraspanin family. In terms of assembly, present in high molecular weight complexes in tumor cells. Interacts with SDCBP2. As to expression, highly expressed in lung, breast, colon and ovarian carcinomas. It is also present on some normal cells, endothelial cells in particular.

The protein resides in the membrane. This is Transmembrane 4 L6 family member 1 (TM4SF1) from Homo sapiens (Human).